The primary structure comprises 445 residues: Tubby-like F-box protein 14 (445 aa).

Residues 56–114 enclose the F-box domain; that stretch reads SSCWANLPPELLRDVIERLEASEAAWPSRKNVVACAAVCRTWRDMCREIVKNPEFCGKI.

This sequence belongs to the TUB family. Ubiquitous.

This Oryza sativa subsp. japonica (Rice) protein is Tubby-like F-box protein 14 (TULP14).